The sequence spans 702 residues: Ribosomal RNA large subunit methyltransferase K/L (702 aa).

In terms of domain architecture, THUMP spans 43–154 (LVYQSLMWSR…KETASIALDL (112 aa)).

The protein belongs to the methyltransferase superfamily. RlmKL family.

It is found in the cytoplasm. It catalyses the reaction guanosine(2445) in 23S rRNA + S-adenosyl-L-methionine = N(2)-methylguanosine(2445) in 23S rRNA + S-adenosyl-L-homocysteine + H(+). It carries out the reaction guanosine(2069) in 23S rRNA + S-adenosyl-L-methionine = N(2)-methylguanosine(2069) in 23S rRNA + S-adenosyl-L-homocysteine + H(+). In terms of biological role, specifically methylates the guanine in position 2445 (m2G2445) and the guanine in position 2069 (m7G2069) of 23S rRNA. The sequence is that of Ribosomal RNA large subunit methyltransferase K/L from Escherichia coli O1:K1 / APEC.